The primary structure comprises 131 residues: MRHYEIVFMVHPDQSEQVPGMIERYTGAITEANGKIHRLEDWGRRQLAYPIQDLHKAHYVLMNVEAPAETIEELETAFRFNDAVLRNMVMRTKVAVTEASPMAKAKDERDSRRGPAGDRSYDEANAEEIAE.

Residues 96–131 (VTEASPMAKAKDERDSRRGPAGDRSYDEANAEEIAE) form a disordered region. Residues 104–122 (KAKDERDSRRGPAGDRSYD) are compositionally biased toward basic and acidic residues.

This sequence belongs to the bacterial ribosomal protein bS6 family.

Binds together with bS18 to 16S ribosomal RNA. This is Small ribosomal subunit protein bS6 from Shewanella sp. (strain ANA-3).